Here is a 446-residue protein sequence, read N- to C-terminus: Tubulin gamma chain (446 aa).

142–148 (AGGTGSG) is a binding site for GTP.

The protein belongs to the tubulin family.

It localises to the cytoplasm. The protein localises to the cytoskeleton. The protein resides in the microtubule organizing center. Its subcellular location is the spindle pole body. Tubulin is the major constituent of microtubules. The gamma chain is found at microtubule organizing centers (MTOC) such as the spindle poles or the centrosome, suggesting that it is involved in the minus-end nucleation of microtubule assembly. The polypeptide is Tubulin gamma chain (tug1) (Schizosaccharomyces japonicus (Fission yeast)).